The primary structure comprises 76 residues: ATP synthase subunit 9, mitochondrial (76 aa).

2 helical membrane-spanning segments follow: residues 14-34 (IATL…VALI) and 52-72 (ILGF…SFLL).

Belongs to the ATPase C chain family. F-type ATPases have 2 components, CF(1) - the catalytic core - and CF(0) - the membrane proton channel. CF(1) has five subunits: alpha(3), beta(3), gamma(1), delta(1), epsilon(1). CF(0) has three main subunits: a, b and c.

It localises to the mitochondrion membrane. Mitochondrial membrane ATP synthase (F(1)F(0) ATP synthase or Complex V) produces ATP from ADP in the presence of a proton gradient across the membrane which is generated by electron transport complexes of the respiratory chain. F-type ATPases consist of two structural domains, F(1) - containing the extramembraneous catalytic core and F(0) - containing the membrane proton channel, linked together by a central stalk and a peripheral stalk. During catalysis, ATP synthesis in the catalytic domain of F(1) is coupled via a rotary mechanism of the central stalk subunits to proton translocation. Part of the complex F(0) domain. A homomeric c-ring of probably 10 subunits is part of the complex rotary element. The sequence is that of ATP synthase subunit 9, mitochondrial (ATP9) from Candida albicans (strain SC5314 / ATCC MYA-2876) (Yeast).